A 442-amino-acid polypeptide reads, in one-letter code: MKMPKNNVYTVSQLNGEVRQLLEGELGRVWLNAEISNFSSPSSGHWYLTLKDHFAQIRCAMFKGKNRTVTFRPANGQQVLVKGSISVYEPRGDYQLIIESMLPAGDGMLAQQYEALKMKLAAEGLFATDTKRPLPTNINKIGVITSATGAALKDVLHVLARRDPSIEVVVYPTQVQGDNAAKLICRAIELANARQEVDVLLLTRGGGSLEDLWCFNSEDLAHCIYNSALPVVSAVGHEVDTSISDYVADVRAPTPSAGAELLSKDADDKAHKLIAGLSRLKQSWQHYQLKTVQKATALENRLQRQDPKRRLEQFEQSFDEMQLRLNAALNSRIHKLALKQQNLSHRLSQQSPEHRLTLEAKRLDYLTTRLNEGIKDKLHDVELSLKNSAHQLQTVSPLATLSRGYSITQDESGKVLLNAKDAKTGDLLTTRLLEGELRSKVV.

The protein belongs to the XseA family. Heterooligomer composed of large and small subunits.

The protein localises to the cytoplasm. It catalyses the reaction Exonucleolytic cleavage in either 5'- to 3'- or 3'- to 5'-direction to yield nucleoside 5'-phosphates.. In terms of biological role, bidirectionally degrades single-stranded DNA into large acid-insoluble oligonucleotides, which are then degraded further into small acid-soluble oligonucleotides. This Shewanella woodyi (strain ATCC 51908 / MS32) protein is Exodeoxyribonuclease 7 large subunit.